Consider the following 532-residue polypeptide: ATP-dependent RNA helicase DBP3 (532 aa).

The disordered stretch occupies residues 1–78 (MGKRDRTEDD…EVAEEKPKMT (78 aa)). The span at 15–58 (KKVKLDKKDKKEKKEKKDKKDKKDKKDKKDKKDKKEKKEKKEKK) shows a compositional bias: basic residues. Positions 126 to 152 (MEFSHVTLDPRITKVLTKFPRPTPIQA) match the Q motif motif. The Helicase ATP-binding domain maps to 155 to 327 (WPYLLAGKDM…EGFMKTPTKV (173 aa)). Position 168–175 (168–175 (AETGSGKT)) interacts with ATP. The DEAD box motif lies at 274–277 (DEAD). In terms of domain architecture, Helicase C-terminal spans 356-502 (RLLDLLRQYA…PVPDELLKFG (147 aa)).

The protein belongs to the DEAD box helicase family. DDX5/DBP2 subfamily.

Its subcellular location is the nucleus. It is found in the nucleolus. The enzyme catalyses ATP + H2O = ADP + phosphate + H(+). In terms of biological role, ATP-dependent RNA helicase required for 60S ribosomal subunit synthesis. Involved in efficient pre-rRNA processing, predominantly at site A3, which is necessary for the normal formation of 25S and 5.8S rRNAs. The sequence is that of ATP-dependent RNA helicase DBP3 (DBP3) from Yarrowia lipolytica (strain CLIB 122 / E 150) (Yeast).